We begin with the raw amino-acid sequence, 964 residues long: Glycine dehydrogenase (decarboxylating) (964 aa).

Polar residues predominate over residues M1–T11. Residues M1–L21 are disordered. K713 carries the post-translational modification N6-(pyridoxal phosphate)lysine.

Belongs to the GcvP family. The glycine cleavage system is composed of four proteins: P, T, L and H. Pyridoxal 5'-phosphate serves as cofactor.

The enzyme catalyses N(6)-[(R)-lipoyl]-L-lysyl-[glycine-cleavage complex H protein] + glycine + H(+) = N(6)-[(R)-S(8)-aminomethyldihydrolipoyl]-L-lysyl-[glycine-cleavage complex H protein] + CO2. In terms of biological role, the glycine cleavage system catalyzes the degradation of glycine. The P protein binds the alpha-amino group of glycine through its pyridoxal phosphate cofactor; CO(2) is released and the remaining methylamine moiety is then transferred to the lipoamide cofactor of the H protein. The polypeptide is Glycine dehydrogenase (decarboxylating) (Leptospira interrogans serogroup Icterohaemorrhagiae serovar Lai (strain 56601)).